Consider the following 266-residue polypeptide: Metallo-beta-lactamase VIM-1 (266 aa).

The N-terminal stretch at 1-20 (MLKVISSLLVYMTASVMAVA) is a signal peptide. Zn(2+)-binding residues include His114, His116, Asp118, His179, Cys198, and His240.

Belongs to the metallo-beta-lactamase superfamily. Class-B beta-lactamase family. Monomer. Zn(2+) is required as a cofactor.

The protein localises to the periplasm. It carries out the reaction a beta-lactam + H2O = a substituted beta-amino acid. With respect to regulation, weakly inhibited by beta-lactamase-blocking agent sulbactam. Its function is as follows. Class B beta-lactamase which confers resistance to the beta-lactam antibiotics, including penicillins, cephalosporins and carbapenems. Acts via hydrolysis of the beta-lactam ring. Has penicillin-, cephalosporin- and carbapenem-hydrolyzing activities. The chain is Metallo-beta-lactamase VIM-1 from Pseudomonas aeruginosa (strain ATCC 15692 / DSM 22644 / CIP 104116 / JCM 14847 / LMG 12228 / 1C / PRS 101 / PAO1).